We begin with the raw amino-acid sequence, 358 residues long: Serine/threonine-protein phosphatase 2A activator 2 (358 aa).

Belongs to the PTPA-type PPIase family.

It is found in the cytoplasm. It catalyses the reaction [protein]-peptidylproline (omega=180) = [protein]-peptidylproline (omega=0). Functionally, PPIases accelerate the folding of proteins. It catalyzes the cis-trans isomerization of proline imidic peptide bonds in oligopeptides. Acts as a regulatory subunit for PP2A-like phosphatases modulating their activity or substrate specificity, probably by inducing a conformational change in the catalytic subunit, a direct target of the PPIase. Can reactivate inactive phosphatase PP2A-phosphatase methylesterase complexes (PP2Ai) in presence of ATP and Mg(2+) by dissociating the inactive form from the complex. The protein is Serine/threonine-protein phosphatase 2A activator 2 (RRD2) of Candida albicans (strain SC5314 / ATCC MYA-2876) (Yeast).